Reading from the N-terminus, the 472-residue chain is Putative cytochrome P450 135B1 (472 aa).

Heme is bound at residue cysteine 388. Residues 442–472 (RDVSATSQATAQGAGCPAARGGGPSRAVGSQ) are disordered. The span at 452-472 (AQGAGCPAARGGGPSRAVGSQ) shows a compositional bias: low complexity.

It belongs to the cytochrome P450 family. Heme serves as cofactor.

The protein is Putative cytochrome P450 135B1 (cyp135B1) of Mycobacterium bovis (strain ATCC BAA-935 / AF2122/97).